The primary structure comprises 705 residues: Probable E3 ubiquitin-protein ligase MID2 (705 aa).

The RING-type zinc finger occupies 30-80 (CPICLELFEDPLLLPCAHSLCFSCAHRILVSSCSSGESIEPITAFQCPTCR). Residues 137-184 (IACQFCEQDPPRDAVKTCITCEVSYCDRCLRATHPNKKPFTSHRLVEP) form a B box-type 1; degenerate zinc finger. The B box-type 2 zinc-finger motif lies at 190-232 (LRGITCLDHENEKVNMYCVSDDQLICALCKLVGRHRDHQVASL). Positions 195, 198, 218, and 224 each coordinate Zn(2+). Positions 233–301 (NDRFEKLKQT…IIQQRKQMIA (69 aa)) form a coiled coil. A COS domain is found at 340–399 (LKENDQARFLQSAKNIAERVAMATASSQVLIPDINFNDAFENFALDFSREKKLLEGLDYL). One can recognise a Fibronectin type-III domain in the interval 404–504 (PPSIREELCT…EPTRLKTNSQ (101 aa)). In terms of domain architecture, B30.2/SPRY spans 486–679 (INQAGSRNSE…ILSGLPAPDF (194 aa)).

It belongs to the TRIM/RBCC family. In terms of assembly, homodimer or heterodimer with MID1. Interacts with IGBP1. In terms of processing, phosphorylated on serine and threonine residues. As to expression, low abundance in brain and lung, with even lower levels in heart, liver, and kidney.

Its subcellular location is the cytoplasm. It localises to the cytoskeleton. It catalyses the reaction S-ubiquitinyl-[E2 ubiquitin-conjugating enzyme]-L-cysteine + [acceptor protein]-L-lysine = [E2 ubiquitin-conjugating enzyme]-L-cysteine + N(6)-ubiquitinyl-[acceptor protein]-L-lysine.. Its pathway is protein modification; protein ubiquitination. Functionally, E3 ubiquitin ligase that plays a role in microtubule stabilization. Mediates the 'Lys-48'-linked polyubiquitination of LRRK2 to drive its localization to microtubules and its proteasomal degradation in neurons. This ubiquitination inhibits LRRK2 kinase activation by RAB29. The protein is Probable E3 ubiquitin-protein ligase MID2 (Mid2) of Mus musculus (Mouse).